Reading from the N-terminus, the 607-residue chain is Isocitrate dehydrogenase kinase/phosphatase (607 aa).

ATP contacts are provided by residues 328–334 and Lys-349; that span reads APGIKGL. The active site involves Asp-384.

The protein belongs to the AceK family.

Its subcellular location is the cytoplasm. The enzyme catalyses L-seryl-[isocitrate dehydrogenase] + ATP = O-phospho-L-seryl-[isocitrate dehydrogenase] + ADP + H(+). Its function is as follows. Bifunctional enzyme which can phosphorylate or dephosphorylate isocitrate dehydrogenase (IDH) on a specific serine residue. This is a regulatory mechanism which enables bacteria to bypass the Krebs cycle via the glyoxylate shunt in response to the source of carbon. When bacteria are grown on glucose, IDH is fully active and unphosphorylated, but when grown on acetate or ethanol, the activity of IDH declines drastically concomitant with its phosphorylation. This is Isocitrate dehydrogenase kinase/phosphatase from Cupriavidus metallidurans (strain ATCC 43123 / DSM 2839 / NBRC 102507 / CH34) (Ralstonia metallidurans).